A 503-amino-acid chain; its full sequence is Maturase K (503 aa).

It belongs to the intron maturase 2 family. MatK subfamily.

It localises to the plastid. The protein localises to the chloroplast. Usually encoded in the trnK tRNA gene intron. Probably assists in splicing its own and other chloroplast group II introns. This is Maturase K from Vicia faba (Broad bean).